Consider the following 320-residue polypeptide: 1-aminocyclopropane-1-carboxylate oxidase 2 (320 aa).

Residues 111 to 143 adopt a coiled-coil conformation; sequence DEYRTAMKDFGKRLENLAEDLLDLLCENLGLEK. The region spanning 156-256 is the Fe2OG dioxygenase domain; sequence PTFGTKVSNY…RMSVASFYNP (101 aa). The Fe cation site is built by histidine 180, aspartate 182, and histidine 237. Arginine 247 contributes to the 2-oxoglutarate binding site.

This sequence belongs to the iron/ascorbate-dependent oxidoreductase family. The cofactor is Fe(2+). Cu(2+) is required as a cofactor. Expressed in vegetative tissues. Constitutively expressed in leaves and blades. In ethylene exposed etiolated seedlings, localized in cells at the outer side of the exaggerated hook in an ethylene-dependent manner and following an ethylene sensitive pattern. Also detected in the root tip when treated by ethylene.

It carries out the reaction 1-aminocyclopropane-1-carboxylate + L-ascorbate + O2 = ethene + L-dehydroascorbate + hydrogen cyanide + CO2 + 2 H2O. It functions in the pathway alkene biosynthesis; ethylene biosynthesis via S-adenosyl-L-methionine; ethylene from S-adenosyl-L-methionine: step 2/2. In terms of biological role, enzyme involved in the ethylene biosynthesis. Required to mediate the 1-aminocyclopropane-1-carboxylic acid (ACC)-mediated reversion of the ABA-induced inhibition of seed germination via endosperm rupture. May promote stem elongation by maximizing the extensibility cells, possibly by activating ethylene biosynthesis, in response to very-long-chain fatty acids (VLCFAs C20:0 to C30:0). The chain is 1-aminocyclopropane-1-carboxylate oxidase 2 (ACO2) from Arabidopsis thaliana (Mouse-ear cress).